A 185-amino-acid chain; its full sequence is uncharacterized protein (185 aa).

This is an uncharacterized protein from Alkalihalophilus pseudofirmus (strain ATCC BAA-2126 / JCM 17055 / OF4) (Bacillus pseudofirmus).